The chain runs to 51 residues: uncharacterized protein (51 aa).

Positions 1 to 51 (MKRKAEVNEAIKNNNTPTESMDPNSYKTQYHDDPNFRGANRNSKQGQQGGM) are disordered. 2 stretches are compositionally biased toward polar residues: residues 11–28 (IKNN…SYKT) and 40–51 (NRNSKQGQQGGM).

This is an uncharacterized protein from Bacillus subtilis (strain 168).